Reading from the N-terminus, the 546-residue chain is CTP synthase (546 aa).

Residues 1–265 (MTKYIFVTGG…DDIIAEQLQL (265 aa)) are amidoligase domain. CTP is bound at residue Ser13. Ser13 serves as a coordination point for UTP. Residues 14–19 (SLGKGI) and Asp71 contribute to the ATP site. Mg(2+) is bound by residues Asp71 and Glu139. Residues 146–148 (DIE), 186–191 (KTKPTQ), and Lys222 contribute to the CTP site. Residues 186-191 (KTKPTQ) and Lys222 contribute to the UTP site. In terms of domain architecture, Glutamine amidotransferase type-1 spans 290–542 (KIAMVGKYVD…VKAALAHQAD (253 aa)). Residue Gly351 coordinates L-glutamine. The active-site Nucleophile; for glutamine hydrolysis is the Cys378. L-glutamine-binding positions include 379-382 (LGMQ), Glu402, and Arg469. Catalysis depends on residues His515 and Glu517.

It belongs to the CTP synthase family. As to quaternary structure, homotetramer.

It carries out the reaction UTP + L-glutamine + ATP + H2O = CTP + L-glutamate + ADP + phosphate + 2 H(+). The enzyme catalyses L-glutamine + H2O = L-glutamate + NH4(+). The catalysed reaction is UTP + NH4(+) + ATP = CTP + ADP + phosphate + 2 H(+). Its pathway is pyrimidine metabolism; CTP biosynthesis via de novo pathway; CTP from UDP: step 2/2. Allosterically activated by GTP, when glutamine is the substrate; GTP has no effect on the reaction when ammonia is the substrate. The allosteric effector GTP functions by stabilizing the protein conformation that binds the tetrahedral intermediate(s) formed during glutamine hydrolysis. Inhibited by the product CTP, via allosteric rather than competitive inhibition. Functionally, catalyzes the ATP-dependent amination of UTP to CTP with either L-glutamine or ammonia as the source of nitrogen. Regulates intracellular CTP levels through interactions with the four ribonucleotide triphosphates. The sequence is that of CTP synthase from Chromobacterium violaceum (strain ATCC 12472 / DSM 30191 / JCM 1249 / CCUG 213 / NBRC 12614 / NCIMB 9131 / NCTC 9757 / MK).